The chain runs to 464 residues: Probable 3-ketoacyl-CoA synthase 21 (464 aa).

Residues 21–41 (LLSSGVSVFEIFAGLLVVHLI) traverse the membrane as a helical segment. Positions 42-333 (YQRIRTRVKV…VIQHILCKKL (292 aa)) constitute an FAE domain. Residues cysteine 187, histidine 352, histidine 356, histidine 385, and asparagine 389 contribute to the active site.

This sequence belongs to the thiolase-like superfamily. Chalcone/stilbene synthases family. As to expression, expressed in flowers.

The protein resides in the membrane. It carries out the reaction a very-long-chain acyl-CoA + malonyl-CoA + H(+) = a very-long-chain 3-oxoacyl-CoA + CO2 + CoA. Its pathway is lipid metabolism; fatty acid biosynthesis. This is Probable 3-ketoacyl-CoA synthase 21 from Arabidopsis thaliana (Mouse-ear cress).